We begin with the raw amino-acid sequence, 389 residues long: 23S rRNA (uracil(747)-C(5))-methyltransferase RlmC (389 aa).

The [4Fe-4S] cluster site is built by Cys6, Cys14, Cys17, and Cys92. 4 residues coordinate S-adenosyl-L-methionine: Gln217, Phe246, Glu273, and Asn319. Residue Cys346 is the Nucleophile of the active site.

Belongs to the class I-like SAM-binding methyltransferase superfamily. RNA M5U methyltransferase family. RlmC subfamily.

The enzyme catalyses uridine(747) in 23S rRNA + S-adenosyl-L-methionine = 5-methyluridine(747) in 23S rRNA + S-adenosyl-L-homocysteine + H(+). Functionally, catalyzes the formation of 5-methyl-uridine at position 747 (m5U747) in 23S rRNA. The protein is 23S rRNA (uracil(747)-C(5))-methyltransferase RlmC of Glaesserella parasuis serovar 5 (strain SH0165) (Haemophilus parasuis).